A 510-amino-acid polypeptide reads, in one-letter code: Archaeal glutamate synthase [NADPH] (510 aa).

2 consecutive 4Fe-4S ferredoxin-type domains span residues 10–37 (YKVEVDPNRCMLCERCTIECSWGVYRRE) and 38–68 (GDRIISYSNRCGACHRCVVMCPRDAITIKEN). Positions 19, 22, 25, 29, 48, 51, 54, and 58 each coordinate [4Fe-4S] cluster.

It belongs to the glutamate synthase family. The cofactor is FMN.

It carries out the reaction 2 L-glutamate + NADP(+) = L-glutamine + 2-oxoglutarate + NADPH + H(+). This Methanocaldococcus jannaschii (strain ATCC 43067 / DSM 2661 / JAL-1 / JCM 10045 / NBRC 100440) (Methanococcus jannaschii) protein is Archaeal glutamate synthase [NADPH].